The sequence spans 222 residues: Protein-L-isoaspartate O-methyltransferase (222 aa).

The active site involves serine 70.

The protein belongs to the methyltransferase superfamily. L-isoaspartyl/D-aspartyl protein methyltransferase family.

The protein localises to the cytoplasm. It catalyses the reaction [protein]-L-isoaspartate + S-adenosyl-L-methionine = [protein]-L-isoaspartate alpha-methyl ester + S-adenosyl-L-homocysteine. In terms of biological role, catalyzes the methyl esterification of L-isoaspartyl residues in peptides and proteins that result from spontaneous decomposition of normal L-aspartyl and L-asparaginyl residues. It plays a role in the repair and/or degradation of damaged proteins. This is Protein-L-isoaspartate O-methyltransferase from Jannaschia sp. (strain CCS1).